Consider the following 324-residue polypeptide: Acetyl-coenzyme A carboxylase carboxyl transferase subunit alpha (324 aa).

A CoA carboxyltransferase C-terminal domain is found at Gln44–Asp298.

This sequence belongs to the AccA family. As to quaternary structure, acetyl-CoA carboxylase is a heterohexamer composed of biotin carboxyl carrier protein (AccB), biotin carboxylase (AccC) and two subunits each of ACCase subunit alpha (AccA) and ACCase subunit beta (AccD).

It is found in the cytoplasm. It catalyses the reaction N(6)-carboxybiotinyl-L-lysyl-[protein] + acetyl-CoA = N(6)-biotinyl-L-lysyl-[protein] + malonyl-CoA. It functions in the pathway lipid metabolism; malonyl-CoA biosynthesis; malonyl-CoA from acetyl-CoA: step 1/1. Its function is as follows. Component of the acetyl coenzyme A carboxylase (ACC) complex. First, biotin carboxylase catalyzes the carboxylation of biotin on its carrier protein (BCCP) and then the CO(2) group is transferred by the carboxyltransferase to acetyl-CoA to form malonyl-CoA. In Trichodesmium erythraeum (strain IMS101), this protein is Acetyl-coenzyme A carboxylase carboxyl transferase subunit alpha.